The primary structure comprises 883 residues: Chromatin structure-remodeling complex protein RSC30 (883 aa).

The segment at residues 14–45 is a DNA-binding region (zn(2)-C6 fungal-type); the sequence is ACTQCRKRKIGCDRAKPICGNCVKYNKPDCFY. Disordered stretches follow at residues 121–157 and 241–273; these read QNNN…DVPS and NTTA…TSRT. Residues 130–149 are compositionally biased toward polar residues; sequence APRQNSSTVSSNVHGNTIVR. Serine 150 is subject to Phosphoserine. Over residues 241–251 the composition is skewed to polar residues; it reads NTTANKINKTG. Basic and acidic residues predominate over residues 252–270; it reads ENSKKGKVDGKRAGFDHQT.

Forms a heteromer with RSC3. Interacts with NPL6. Component of the two forms of the RSC complex composed of at least either RSC1 or RSC2, and ARP7, ARP9, LDB7, NPL6, RSC3, RSC30, RSC4, RSC58, RSC6, RSC8, RSC9, SFH1, STH1, HTL1 and probably RTT102. The complexes interact with histone and histone variant components of centromeric chromatin. Component of a fungal-specific module (HTL1-LDB7-NPL6-RSC3-RSC30) within the RSC complex.

The protein resides in the nucleus. Functionally, component of the chromatin structure-remodeling complex (RSC), which is involved in transcription regulation and nucleosome positioning. RSC is responsible for the transfer of a histone octamer from a nucleosome core particle to naked DNA. The reaction requires ATP and involves an activated RSC-nucleosome intermediate. Remodeling reaction also involves DNA translocation, DNA twist and conformational change. As a reconfigurer of centromeric and flanking nucleosomes, RSC complex is required both for proper kinetochore function in chromosome segregation and, via a PKC1-dependent signaling pathway, for organization of the cellular cytoskeleton. This subunit is required for transcription of ribosomal protein genes and genes involved in the integrity of the cell wall. Together with HTL1, LDB7, NPL6, RSC3 components, defines a fungal-specific module within the RSC complex that plays a role in many cellular functions including the maintenance of cell wall integrity. The sequence is that of Chromatin structure-remodeling complex protein RSC30 (RSC30) from Saccharomyces cerevisiae (strain ATCC 204508 / S288c) (Baker's yeast).